We begin with the raw amino-acid sequence, 405 residues long: CMP-sialic acid transporter 5 (405 aa).

The Cytoplasmic portion of the chain corresponds to 1–43 (MQRNGVVECSVCRSRLVVPSPRSVSRAYDKHRSKISSKFRALN). Residues 44 to 64 (VLLVVGDCILVGLQPILVFMS) form a helical membrane-spanning segment. Topologically, residues 65-74 (KVDGKFQFSP) are lumenal. A helical membrane pass occupies residues 75–95 (ISVNFLTEVTKVVFAIVMLII). Residues 96–121 (QSRKQKVGEKPLLARSTFIQAARNNA) lie on the Cytoplasmic side of the membrane. The helical transmembrane segment at 122–142 (LLAVPALLYAINNYLKFIMQL) threads the bilayer. The Lumenal portion of the chain corresponds to 143 to 147 (YFNPS). A helical membrane pass occupies residues 148-168 (TVKMLSNLKVLVIAVLLKFIM). The Cytoplasmic portion of the chain corresponds to 169–171 (KRR). The chain crosses the membrane as a helical span at residues 172–192 (FSVIQWEALALLLIGISINQL). The Lumenal portion of the chain corresponds to 193–200 (RTVPAGNT). Residues 201 to 221 (AFGLPVTAIAYIYTLIFVTVP) traverse the membrane as a helical segment. Over 222-244 (SLASVYNEYALKSQYDTSIYLQN) the chain is Cytoplasmic. The chain crosses the membrane as a helical span at residues 245–265 (LFLYGYGAIFNFLGILGTALF). Over 266–281 (QGPESFNILRGHSRAT) the chain is Lumenal. The helical transmembrane segment at 282 to 302 (MFLICNNAAQGILSSFFFKYA) threads the bilayer. Residues 303–322 (DTILKKYSSTVATIFTGLAS) are Cytoplasmic-facing. A helical membrane pass occupies residues 323–343 (AAFLGHTLTINFLLGISVVFI). Over 344–405 (SMHQFFSPLA…TDERQPLLPT (62 aa)) the chain is Lumenal. The interval 368-405 (DTQNHRSSESSFVNMTAGAAEDASHRIGTDERQPLLPT) is disordered. Residues 389 to 405 (DASHRIGTDERQPLLPT) show a composition bias toward basic and acidic residues.

It belongs to the nucleotide-sugar transporter family. CMP-Sialate:CMP antiporter (TC 2.A.7.12) subfamily.

It localises to the golgi apparatus membrane. Its function is as follows. Sugar transporter involved in the transport of CMP-sialic acid from the cytoplasm into the Golgi. May transport important nucleotide sugars such as CMP-Kdo (2-keto-3-deoxy-D-manno-octulosonic acid) in physiological conditions. The sequence is that of CMP-sialic acid transporter 5 from Oryza sativa subsp. japonica (Rice).